Reading from the N-terminus, the 295-residue chain is 5,10-methylenetetrahydrofolate reductase (295 aa).

Glu-28 serves as the catalytic Proton donor/acceptor. Position 59 (Thr-59) interacts with NADH. The FAD site is built by His-89, Arg-119, Gly-120, Asp-121, Ala-133, Tyr-153, His-157, Ala-160, Asp-166, Asn-169, Arg-172, and Lys-173. Asp-121 provides a ligand contact to (6S)-5-methyl-5,6,7,8-tetrahydrofolate. Gln-184 serves as a coordination point for NADH. The (6S)-5-methyl-5,6,7,8-tetrahydrofolate site is built by Gln-184, Gln-220, and Lys-280.

The protein belongs to the methylenetetrahydrofolate reductase family. FAD serves as cofactor.

The catalysed reaction is (6S)-5-methyl-5,6,7,8-tetrahydrofolate + NAD(+) = (6R)-5,10-methylene-5,6,7,8-tetrahydrofolate + NADH + H(+). Its pathway is one-carbon metabolism; tetrahydrofolate interconversion. The protein operates within amino-acid biosynthesis; L-methionine biosynthesis via de novo pathway. Catalyzes the NADH-dependent reduction of 5,10-methylenetetrahydrofolate to 5-methyltetrahydrofolate. Is required to provide the methyl group necessary for methionine synthetase to convert homocysteine to methionine; the methyl group is given by 5-methyltetrahydrofolate. This Buchnera aphidicola subsp. Baizongia pistaciae (strain Bp) protein is 5,10-methylenetetrahydrofolate reductase (metF).